Consider the following 99-residue polypeptide: Small integral membrane protein 14 (99 aa).

At Met1–Ser49 the chain is on the lumenal side. A helical membrane pass occupies residues Gly50–Leu70. The Cytoplasmic portion of the chain corresponds to Arg71–Asp99. The tract at residues Gly77 to Asp99 is disordered.

In terms of tissue distribution, ubiquitously expressed.

It is found in the endoplasmic reticulum membrane. This is Small integral membrane protein 14 (Smim14) from Mus musculus (Mouse).